The chain runs to 531 residues: Nuclear RNA export factor 3 (531 aa).

2 disordered regions span residues 33–59 (RSEPVNPGMHSSSHQQQDGDAAMHGAH) and 83–106 (QDQTHVNMEREQKPPERRMEGNMP). Over residues 41–50 (MHSSSHQQQD) the composition is skewed to polar residues. Residues 83-102 (QDQTHVNMEREQKPPERRME) are compositionally biased toward basic and acidic residues. One can recognise an RRM domain in the interval 113-192 (WFKITVPFGI…IFVNPAGIPH (80 aa)). The 151-residue stretch at 344-494 (LVLQFLQQYY…LCIVNDKLFV (151 aa)) folds into the NTF2 domain.

The protein belongs to the NXF family. In terms of assembly, interacts with NXT1, NXT2, E1B-AP5 and CRM1 nuclear export factor. As to expression, expressed at high level in testis and at low level in a small number of tissues.

It is found in the nucleus. Its subcellular location is the cytoplasm. Functionally, may function as a tissue-specific nuclear mRNA export factor. The chain is Nuclear RNA export factor 3 (NXF3) from Homo sapiens (Human).